Consider the following 78-residue polypeptide: Acyl carrier protein 1 (78 aa).

In terms of domain architecture, Carrier spans serine 2–glutamine 77. The residue at position 37 (serine 37) is an O-(pantetheine 4'-phosphoryl)serine.

It belongs to the acyl carrier protein (ACP) family. In terms of processing, 4'-phosphopantetheine is transferred from CoA to a specific serine of apo-ACP by AcpS. This modification is essential for activity because fatty acids are bound in thioester linkage to the sulfhydryl of the prosthetic group.

The protein localises to the cytoplasm. Its pathway is lipid metabolism; fatty acid biosynthesis. Functionally, carrier of the growing fatty acid chain in fatty acid biosynthesis. This Pseudomonas aeruginosa (strain ATCC 15692 / DSM 22644 / CIP 104116 / JCM 14847 / LMG 12228 / 1C / PRS 101 / PAO1) protein is Acyl carrier protein 1.